The sequence spans 205 residues: Imidazoleglycerol-phosphate dehydratase (205 aa).

This sequence belongs to the imidazoleglycerol-phosphate dehydratase family.

It localises to the cytoplasm. The enzyme catalyses D-erythro-1-(imidazol-4-yl)glycerol 3-phosphate = 3-(imidazol-4-yl)-2-oxopropyl phosphate + H2O. Its pathway is amino-acid biosynthesis; L-histidine biosynthesis; L-histidine from 5-phospho-alpha-D-ribose 1-diphosphate: step 6/9. The chain is Imidazoleglycerol-phosphate dehydratase from Chloroflexus aggregans (strain MD-66 / DSM 9485).